The primary structure comprises 383 residues: MKSWFAFFYYLFIKVIGALLFWVKLGNQVTLLVSFPDNARAILKEYQKGHFSFPIHVLLTQHAKSLEKEFPELTVSVINEKHPLHICKAVFSMLNSKTVIVDNYFVLTTVLTSRPDIECIQVWHANGAFKRFGLKDINTQNRSRADIRRFRKVYASFDRIVVGSEHMADIFKEFFDIKGDTFLRFGVPLTDAYYEARENSNDLKSKYQLPAEKKIILYAPTFRDHQFESFSLPFSEKQLQHDLKGEYLLAVKLHPVMKESAELPEDSAWIKDVSDLPLADLLKMSDLLISDYSSVPFEFALLDKPILFYTYDMEAYNRTRGLIRHYTEVIPGMPCCDSGMLLDQLKDMDKLQSEVERFSREWNLYSRGNASKQLLSYVNEKSN.

Belongs to the CDP-glycerol glycerophosphotransferase family.

Its subcellular location is the cell membrane. It catalyses the reaction N-acetyl-beta-D-mannosaminyl-(1-&gt;4)-N-acetyl-alpha-D-glucosaminyl di-trans,octa-cis-undecaprenyl diphosphate + CDP-glycerol = 4-O-[(2R)-glycerylphospho]-N-acetyl-beta-D-mannosaminyl-(1-&gt;4)-N-acetyl-alpha-D-glucosaminyl di-trans,octa-cis-undecaprenyl diphosphate + CMP + H(+). Its pathway is cell wall biogenesis; poly(ribitol phosphate) teichoic acid biosynthesis. Functionally, catalyzes the addition of a single glycerol phosphate residue to the prenoldiphosphate-linked disaccharide. This Bacillus spizizenii (strain ATCC 23059 / NRRL B-14472 / W23) (Bacillus subtilis subsp. spizizenii) protein is Teichoic acid glycerol-phosphate primase (tarB).